The following is a 377-amino-acid chain: Serine protease grass (377 aa).

The first 26 residues, 1–26, serve as a signal peptide directing secretion; that stretch reads MMIASSLAVLYGIAIVSSMGVQSARA. Residues 31-89 enclose the Clip domain; it reads DCTTPDGDQGQCMPFSSCRTIEERLTEAQKAGQKVPADYASYLQKALCGEFNGVRHFCC. 6 disulfides stabilise this stretch: cysteine 32-cysteine 88, cysteine 42-cysteine 78, cysteine 48-cysteine 89, cysteine 111-cysteine 243, cysteine 148-cysteine 164, and cysteine 188-cysteine 197. Positions 91–118 are linker; sequence SANIQHNSKVMSLFKDENFDCGNFLSQR. The Peptidase S1 domain maps to 119–373; the sequence is VSNGYEVKLS…YVQWITDTMA (255 aa). Catalysis depends on histidine 163, which acts as the Charge relay system. Residues glutamate 179, arginine 181, threonine 184, and aspartate 187 each contribute to the Ca(2+) site. Residue aspartate 223 is the Charge relay system of the active site. N-linked (GlcNAc...) asparagine glycans are attached at residues asparagine 230 and asparagine 270. Intrachain disulfides connect cysteine 290–cysteine 304 and cysteine 314–cysteine 349. The Charge relay system role is filled by serine 318.

This sequence belongs to the peptidase S1 family. CLIP subfamily. In terms of processing, proteolytically cleaved by a tryspin-like protease which is likely to activate grass.

Its subcellular location is the secreted. Its function is as follows. Endopeptidase. Plays a key role in innate immunity by activating the Toll pathway in response to fungal and Gram-positive bacterial infections, presumably downstream of pattern-recognition receptors (PRR), such as PGRP-SA, GNBP1 and GNBP3, and upstream of spz processing enzyme SPE. The polypeptide is Serine protease grass (Drosophila melanogaster (Fruit fly)).